We begin with the raw amino-acid sequence, 429 residues long: Histidinol dehydrogenase (429 aa).

The NAD(+) site is built by Tyr-127, Gln-188, and Asn-211. The substrate site is built by Ser-234, Gln-256, and His-259. 2 residues coordinate Zn(2+): Gln-256 and His-259. Residues Glu-324 and His-325 each act as proton acceptor in the active site. His-325, Asp-358, Glu-412, and His-417 together coordinate substrate. Asp-358 contacts Zn(2+). His-417 contacts Zn(2+).

Belongs to the histidinol dehydrogenase family. The cofactor is Zn(2+).

The enzyme catalyses L-histidinol + 2 NAD(+) + H2O = L-histidine + 2 NADH + 3 H(+). It functions in the pathway amino-acid biosynthesis; L-histidine biosynthesis; L-histidine from 5-phospho-alpha-D-ribose 1-diphosphate: step 9/9. Catalyzes the sequential NAD-dependent oxidations of L-histidinol to L-histidinaldehyde and then to L-histidine. The polypeptide is Histidinol dehydrogenase (Bacillus thuringiensis subsp. konkukian (strain 97-27)).